We begin with the raw amino-acid sequence, 284 residues long: Tropomyosin (284 aa).

A coiled-coil region spans residues 1-284; the sequence is MDAIKKKMQA…DQTFQELFGY (284 aa). The segment covering 113-142 has biased composition (basic and acidic residues); that stretch reads LEKATHTADESDRVRKVMENRSFQDEERAN. The segment at 113 to 143 is disordered; that stretch reads LEKATHTADESDRVRKVMENRSFQDEERANT.

It belongs to the tropomyosin family.

Its function is as follows. Tropomyosin, in association with the troponin complex, plays a central role in the calcium dependent regulation of muscle contraction. The protein is Tropomyosin of Acanthocheilonema viteae (Filarial nematode worm).